We begin with the raw amino-acid sequence, 349 residues long: NADH-quinone oxidoreductase subunit H (349 aa).

A run of 8 helical transmembrane segments spans residues 20 to 42 (WTLI…LTYF), 88 to 108 (GIFI…WAVV), 123 to 143 (LLYI…SGWA), 167 to 187 (MGFS…VEIV), 202 to 222 (FLSW…ISGV), 249 to 269 (GMAF…VSAL), 284 to 304 (FLPD…FLFL), and 325 to 345 (VFVP…MSPL).

This sequence belongs to the complex I subunit 1 family. In terms of assembly, NDH-1 is composed of 14 different subunits. Subunits NuoA, H, J, K, L, M, N constitute the membrane sector of the complex.

The protein resides in the cell inner membrane. The catalysed reaction is a quinone + NADH + 5 H(+)(in) = a quinol + NAD(+) + 4 H(+)(out). NDH-1 shuttles electrons from NADH, via FMN and iron-sulfur (Fe-S) centers, to quinones in the respiratory chain. The immediate electron acceptor for the enzyme in this species is believed to be ubiquinone. Couples the redox reaction to proton translocation (for every two electrons transferred, four hydrogen ions are translocated across the cytoplasmic membrane), and thus conserves the redox energy in a proton gradient. This subunit may bind ubiquinone. The protein is NADH-quinone oxidoreductase subunit H of Dechloromonas aromatica (strain RCB).